Here is a 416-residue protein sequence, read N- to C-terminus: Tryptophan synthase beta chain (416 aa).

N6-(pyridoxal phosphate)lysine is present on Lys-98.

This sequence belongs to the TrpB family. As to quaternary structure, tetramer of two alpha and two beta chains. The cofactor is pyridoxal 5'-phosphate.

It carries out the reaction (1S,2R)-1-C-(indol-3-yl)glycerol 3-phosphate + L-serine = D-glyceraldehyde 3-phosphate + L-tryptophan + H2O. It functions in the pathway amino-acid biosynthesis; L-tryptophan biosynthesis; L-tryptophan from chorismate: step 5/5. The beta subunit is responsible for the synthesis of L-tryptophan from indole and L-serine. In Ruegeria pomeroyi (strain ATCC 700808 / DSM 15171 / DSS-3) (Silicibacter pomeroyi), this protein is Tryptophan synthase beta chain.